A 284-amino-acid chain; its full sequence is Bifunctional protein FolD (284 aa).

Residues 166–168 (GSS) and Ile232 each bind NADP(+).

The protein belongs to the tetrahydrofolate dehydrogenase/cyclohydrolase family. Homodimer.

It carries out the reaction (6R)-5,10-methylene-5,6,7,8-tetrahydrofolate + NADP(+) = (6R)-5,10-methenyltetrahydrofolate + NADPH. It catalyses the reaction (6R)-5,10-methenyltetrahydrofolate + H2O = (6R)-10-formyltetrahydrofolate + H(+). The protein operates within one-carbon metabolism; tetrahydrofolate interconversion. Its function is as follows. Catalyzes the oxidation of 5,10-methylenetetrahydrofolate to 5,10-methenyltetrahydrofolate and then the hydrolysis of 5,10-methenyltetrahydrofolate to 10-formyltetrahydrofolate. In Buchnera aphidicola subsp. Cinara cedri (strain Cc), this protein is Bifunctional protein FolD.